The following is a 272-amino-acid chain: Putative phosphoenolpyruvate synthase regulatory protein (272 aa).

An ADP-binding site is contributed by 152–159; it reads GVSRSGKT.

The protein belongs to the pyruvate, phosphate/water dikinase regulatory protein family. PSRP subfamily.

It catalyses the reaction [pyruvate, water dikinase] + ADP = [pyruvate, water dikinase]-phosphate + AMP + H(+). The catalysed reaction is [pyruvate, water dikinase]-phosphate + phosphate + H(+) = [pyruvate, water dikinase] + diphosphate. Functionally, bifunctional serine/threonine kinase and phosphorylase involved in the regulation of the phosphoenolpyruvate synthase (PEPS) by catalyzing its phosphorylation/dephosphorylation. This is Putative phosphoenolpyruvate synthase regulatory protein from Methylibium petroleiphilum (strain ATCC BAA-1232 / LMG 22953 / PM1).